A 461-amino-acid chain; its full sequence is Kynureninase (461 aa).

Pyridoxal 5'-phosphate contacts are provided by residues Leu-114, Thr-115, 142 to 145 (FPSD), Asp-228, His-231, and Tyr-253. An N6-(pyridoxal phosphate)lysine modification is found at Lys-254. Trp-288 and Asn-316 together coordinate pyridoxal 5'-phosphate.

Belongs to the kynureninase family. In terms of assembly, homodimer. Pyridoxal 5'-phosphate is required as a cofactor.

The protein localises to the cytoplasm. It carries out the reaction L-kynurenine + H2O = anthranilate + L-alanine + H(+). The enzyme catalyses 3-hydroxy-L-kynurenine + H2O = 3-hydroxyanthranilate + L-alanine + H(+). Its pathway is amino-acid degradation; L-kynurenine degradation; L-alanine and anthranilate from L-kynurenine: step 1/1. The protein operates within cofactor biosynthesis; NAD(+) biosynthesis; quinolinate from L-kynurenine: step 2/3. Functionally, catalyzes the cleavage of L-kynurenine (L-Kyn) and L-3-hydroxykynurenine (L-3OHKyn) into anthranilic acid (AA) and 3-hydroxyanthranilic acid (3-OHAA), respectively. The chain is Kynureninase from Lodderomyces elongisporus (strain ATCC 11503 / CBS 2605 / JCM 1781 / NBRC 1676 / NRRL YB-4239) (Yeast).